Consider the following 1057-residue polypeptide: Histone deacetylase complex subunit SAP130 (1057 aa).

Disordered regions lie at residues Met1–Gln68, Thr289–Pro314, Gly556–Thr594, Gln624–Pro692, and Asn827–Glu880. Residues Glu41–His54 show a composition bias toward basic and acidic residues. Residues Thr289–Pro301 are compositionally biased toward polar residues. 2 stretches are compositionally biased toward low complexity: residues Gln579 to Ala590 and Gln624 to Ser642. The segment covering Arg671–Ser682 has biased composition (polar residues).

Belongs to the SAP130 family. Component of a mSin3A corepressor complex that contains SIN3A, SAP130, SUDS3/SAP45, ARID4B/SAP180, HDAC1 and HDAC2.

The protein resides in the nucleus. Its function is as follows. Acts as a transcriptional repressor. May function in the assembly and/or enzymatic activity of the mSin3A corepressor complex or in mediating interactions between the complex and other regulatory complexes. The protein is Histone deacetylase complex subunit SAP130 (SAP130) of Gallus gallus (Chicken).